The sequence spans 311 residues: Aspartate carbamoyltransferase catalytic subunit (311 aa).

2 residues coordinate carbamoyl phosphate: arginine 59 and threonine 60. Lysine 87 contacts L-aspartate. The carbamoyl phosphate site is built by arginine 109, histidine 139, and glutamine 142. L-aspartate-binding residues include arginine 172 and arginine 224. Residues alanine 265 and proline 266 each coordinate carbamoyl phosphate.

It belongs to the aspartate/ornithine carbamoyltransferase superfamily. ATCase family. In terms of assembly, heterododecamer (2C3:3R2) of six catalytic PyrB chains organized as two trimers (C3), and six regulatory PyrI chains organized as three dimers (R2).

It carries out the reaction carbamoyl phosphate + L-aspartate = N-carbamoyl-L-aspartate + phosphate + H(+). It functions in the pathway pyrimidine metabolism; UMP biosynthesis via de novo pathway; (S)-dihydroorotate from bicarbonate: step 2/3. In terms of biological role, catalyzes the condensation of carbamoyl phosphate and aspartate to form carbamoyl aspartate and inorganic phosphate, the committed step in the de novo pyrimidine nucleotide biosynthesis pathway. This chain is Aspartate carbamoyltransferase catalytic subunit, found in Streptococcus pyogenes serotype M1.